We begin with the raw amino-acid sequence, 437 residues long: MPVMGCSVCSAFAELSRWAHGYPGGQTDAVAIEGDLWQLNLQILDVLEIDHASFVNFVFLGKGLTCIPWGTRGEFFTSWIQGLLERCSCPSVDIHKQLFYYGIYMCYFLTVYLLLYPSPVIIKYARSFFRGEQLWHLLCKFEWVIEKFMEYVFKINFNHPVIKINEGDLESYMFLRKKLKRQYLTPQLAVPPLFTRLPPSLQFIDEGHTHLDTHGEALASALKSCCEDVPCGSPFDSMVKNLALRCALSHQFSVIPVSDQSPNIVTQIREKILSISVLACVVRVPILSATVWSLVETKRPTFFVYCGECKHCLNFGKGKFLKVNFNPTHAFYCRDQKEKQCNVCATTGRIYCSFCGSADIHTASLTQMLDGVPIIRAVMANNAAFMLDTAQRSVDFILPCLGTHAKCEGSVLRRLSLLQLLYLTLNASELMCARCQS.

2 helical membrane-spanning segments follow: residues 102 to 122 and 272 to 292; these read GIYM…PVII and ILSI…ATVW.

The protein belongs to the herpesviridae UL49 family.

The protein localises to the host membrane. This is an uncharacterized protein from Connochaetes taurinus (Blue wildebeest).